The following is a 460-amino-acid chain: Antizyme inhibitor 2 (460 aa).

Residues 117-140 (QIAQIKYAAKHGIQLLSFDNEMEL) form a necessary for polyamine uptake stimulation region.

This sequence belongs to the Orn/Lys/Arg decarboxylase class-II family. ODC antizyme inhibitor subfamily. As to quaternary structure, monomer. Interacts with OAZ1, OAZ2 and OAZ3; this interaction disrupts the interaction between the antizyme and ODC1. Does not form a heterodimer with ODC1. Post-translationally, ubiquitinated, leading to its proteasomal degradation; a process that is reduced in presence of antizymes. May also be degraded through the lysosomal degradative pathway in a proteasomal-independent manner. In terms of tissue distribution, expressed in the neocortex, thalamus, hippocampus, cerebellum, medulla oblongata, gray and white matter. Expressed in neurons, oligodendrocytes, basket, Purkinje and pyramidal cells. Expressed in spermatocytes and Leydig cells of the testis. Expressed in luteal theca cells lining corpus luteum cysts and in hilus cells of the ovary. Expressed in primary and neoplastic mast cells (MC) (at protein level). Highly expressed in brain. Also expressed in testis.

It localises to the nucleus. Its subcellular location is the cytoplasm. The protein localises to the perinuclear region. It is found in the membrane. The protein resides in the cytoplasmic vesicle. It localises to the endoplasmic reticulum-Golgi intermediate compartment. Its subcellular location is the golgi apparatus. The protein localises to the cis-Golgi network. It is found in the trans-Golgi network. The protein resides in the cytoplasmic granule. It localises to the cell projection. Its subcellular location is the axon. The protein localises to the dendrite. It is found in the perikaryon. Its function is as follows. Antizyme inhibitor (AZI) protein that positively regulates ornithine decarboxylase (ODC) activity and polyamine uptake. AZI is an enzymatically inactive ODC homolog that counteracts the negative effect of ODC antizymes (AZs) OAZ1, OAZ2 and OAZ3 on ODC activity by competing with ODC for antizyme-binding. Inhibits antizyme-dependent ODC degradation and releases ODC monomers from their inactive complex with antizymes, leading to formation of the catalytically active ODC homodimer and restoring polyamine production. Participates in the morphological integrity of the trans-Golgi network (TGN) and functions as a regulator of intracellular secretory vesicle trafficking. The protein is Antizyme inhibitor 2 (AZIN2) of Homo sapiens (Human).